Reading from the N-terminus, the 171-residue chain is Lipoprotein signal peptidase (171 aa).

The next 3 membrane-spanning stretches (helical) occupy residues 8-28, 64-84, and 99-119; these read SFLW…YIVV, WQQY…VYFL, and ALII…GFVV. Catalysis depends on residues D120 and D138. The helical transmembrane segment at 133–153 threads the bilayer; the sequence is VFNIADIAICIGAGLLALDAF.

This sequence belongs to the peptidase A8 family.

The protein localises to the cell inner membrane. It carries out the reaction Release of signal peptides from bacterial membrane prolipoproteins. Hydrolyzes -Xaa-Yaa-Zaa-|-(S,diacylglyceryl)Cys-, in which Xaa is hydrophobic (preferably Leu), and Yaa (Ala or Ser) and Zaa (Gly or Ala) have small, neutral side chains.. Its pathway is protein modification; lipoprotein biosynthesis (signal peptide cleavage). Its function is as follows. This protein specifically catalyzes the removal of signal peptides from prolipoproteins. This chain is Lipoprotein signal peptidase, found in Haemophilus influenzae (strain PittGG).